The chain runs to 496 residues: Glycylpeptide N-tetradecanoyltransferase 1 (496 aa).

Positions 1–82 are disordered; the sequence is MADESETAVK…STQDQPVKMT (82 aa). A phosphoserine mark is found at Ser31 and Ser47. The span at 55–66 shows a compositional bias: basic residues; it reads KKKKKKQKKKKE. Ser83 is subject to Phosphoserine. Tetradecanoyl-CoA-binding residues include Gln118, Phe119, Trp120, Phe247, Leu248, Cys249, Val250, Ser256, Arg258, Val259, and Ala260.

This sequence belongs to the NMT family. In terms of tissue distribution, ubiquitous.

Its subcellular location is the cytoplasm. The protein localises to the cytosol. The protein resides in the membrane. The catalysed reaction is N-terminal glycyl-[protein] + tetradecanoyl-CoA = N-tetradecanoylglycyl-[protein] + CoA + H(+). It carries out the reaction N-terminal glycyl-L-lysyl-[protein] + tetradecanoyl-CoA = N-terminal glycyl-(N(6)-tetradecanoyl)-L-lysyl-[protein] + CoA + H(+). In terms of biological role, adds a myristoyl group to the N-terminal glycine residue of certain cellular and viral proteins. Also able to mediate N-terminal lysine myristoylation of proteins: catalyzes myristoylation of ARF6 on both 'Gly-2' and 'Lys-3'. Lysine myristoylation is required to maintain ARF6 on membranes during the GTPase cycle. Required for normal embryogenesis. The polypeptide is Glycylpeptide N-tetradecanoyltransferase 1 (Mus musculus (Mouse)).